We begin with the raw amino-acid sequence, 131 residues long: Arsenate reductase 2 (131 aa).

Residues Cys-10, Cys-82, and Cys-89 each act as nucleophile in the active site. Disulfide bonds link Cys-10–Cys-82 and Cys-82–Cys-89.

This sequence belongs to the low molecular weight phosphotyrosine protein phosphatase family. Thioredoxin-coupled ArsC subfamily.

The protein resides in the cytoplasm. It carries out the reaction arsenate + [thioredoxin]-dithiol + H(+) = arsenite + [thioredoxin]-disulfide + H2O. Catalyzes the reduction of arsenate [As(V)] to arsenite [As(III)]. The protein is Arsenate reductase 2 of Staphylococcus epidermidis (strain ATCC 35984 / DSM 28319 / BCRC 17069 / CCUG 31568 / BM 3577 / RP62A).